We begin with the raw amino-acid sequence, 356 residues long: Xylose/arabinose import permease protein XylH (356 aa).

10 consecutive transmembrane segments (helical) span residues 14-34 (LFLV…AYFS), 41-61 (IFQY…LMLC), 70-90 (ALAN…YQAI), 96-116 (IVVS…MNGL), 126-146 (LITT…YSGG), 161-181 (VSIL…LILL), 211-231 (VKII…IIQG), 242-262 (FTAD…TSLV), 266-286 (GSLV…NGFN), and 287-307 (ILGI…VVVM).

This sequence belongs to the binding-protein-dependent transport system permease family. As to quaternary structure, the complex is composed of two ATP-binding proteins (XylG), two transmembrane proteins (XylH) and a solute-binding protein (XylF).

It is found in the cell membrane. Its function is as follows. Part of the ABC transporter complex XylFGH involved in the uptake of xylose and arabinose. Responsible for the translocation of the substrate across the membrane. The sequence is that of Xylose/arabinose import permease protein XylH from Sulfolobus acidocaldarius (strain ATCC 33909 / DSM 639 / JCM 8929 / NBRC 15157 / NCIMB 11770).